The following is a 188-amino-acid chain: Elongation factor P (188 aa).

Lys-34 bears the N6-(3,6-diaminohexanoyl)-5-hydroxylysine mark.

The protein belongs to the elongation factor P family. In terms of processing, may be beta-lysylated on the epsilon-amino group of Lys-34 by the combined action of EpmA and EpmB, and then hydroxylated on the C5 position of the same residue by EpmC (if this protein is present). Lysylation is critical for the stimulatory effect of EF-P on peptide-bond formation. The lysylation moiety may extend toward the peptidyltransferase center and stabilize the terminal 3-CCA end of the tRNA. Hydroxylation of the C5 position on Lys-34 may allow additional potential stabilizing hydrogen-bond interactions with the P-tRNA.

Its subcellular location is the cytoplasm. Its pathway is protein biosynthesis; polypeptide chain elongation. In terms of biological role, involved in peptide bond synthesis. Alleviates ribosome stalling that occurs when 3 or more consecutive Pro residues or the sequence PPG is present in a protein, possibly by augmenting the peptidyl transferase activity of the ribosome. Modification of Lys-34 is required for alleviation. The polypeptide is Elongation factor P (Photobacterium profundum (strain SS9)).